The sequence spans 425 residues: Serine--tRNA ligase (425 aa).

Thr232–Glu234 contributes to the L-serine binding site. ATP contacts are provided by residues Arg263–Glu265 and Val279. Glu286 is an L-serine binding site. ATP is bound at residue Glu350–Ser353. Thr387 is an L-serine binding site.

This sequence belongs to the class-II aminoacyl-tRNA synthetase family. Type-1 seryl-tRNA synthetase subfamily. As to quaternary structure, homodimer. The tRNA molecule binds across the dimer.

It localises to the cytoplasm. The catalysed reaction is tRNA(Ser) + L-serine + ATP = L-seryl-tRNA(Ser) + AMP + diphosphate + H(+). It catalyses the reaction tRNA(Sec) + L-serine + ATP = L-seryl-tRNA(Sec) + AMP + diphosphate + H(+). It functions in the pathway aminoacyl-tRNA biosynthesis; selenocysteinyl-tRNA(Sec) biosynthesis; L-seryl-tRNA(Sec) from L-serine and tRNA(Sec): step 1/1. In terms of biological role, catalyzes the attachment of serine to tRNA(Ser). Is also able to aminoacylate tRNA(Sec) with serine, to form the misacylated tRNA L-seryl-tRNA(Sec), which will be further converted into selenocysteinyl-tRNA(Sec). This is Serine--tRNA ligase from Methanoregula boonei (strain DSM 21154 / JCM 14090 / 6A8).